The following is a 228-amino-acid chain: 2,3-bisphosphoglycerate-dependent phosphoglycerate mutase (228 aa).

Substrate-binding positions include 7–14 (RHGESAWN), 20–21 (TG), arginine 59, 86–89 (ERHY), lysine 97, 113–114 (RR), and 182–183 (GN). Histidine 8 (tele-phosphohistidine intermediate) is an active-site residue. Glutamate 86 functions as the Proton donor/acceptor in the catalytic mechanism.

It belongs to the phosphoglycerate mutase family. BPG-dependent PGAM subfamily.

It catalyses the reaction (2R)-2-phosphoglycerate = (2R)-3-phosphoglycerate. The protein operates within carbohydrate degradation; glycolysis; pyruvate from D-glyceraldehyde 3-phosphate: step 3/5. Catalyzes the interconversion of 2-phosphoglycerate and 3-phosphoglycerate. The polypeptide is 2,3-bisphosphoglycerate-dependent phosphoglycerate mutase (Fusobacterium nucleatum subsp. nucleatum (strain ATCC 25586 / DSM 15643 / BCRC 10681 / CIP 101130 / JCM 8532 / KCTC 2640 / LMG 13131 / VPI 4355)).